Here is a 103-residue protein sequence, read N- to C-terminus: Large ribosomal subunit protein bL21 (103 aa).

Belongs to the bacterial ribosomal protein bL21 family. Part of the 50S ribosomal subunit. Contacts protein L20.

Functionally, this protein binds to 23S rRNA in the presence of protein L20. The protein is Large ribosomal subunit protein bL21 of Desulfotalea psychrophila (strain LSv54 / DSM 12343).